We begin with the raw amino-acid sequence, 190 residues long: MPFLQISLLSIGVAADAFACSVVRGTAIQVNLFKRALVLAGIFGVFQAAMPLIGWFIGRFFAGITFIAEIDHWIAFALLGIVGTKMIWDAFQPEDDETIVDDGRVQFRPAIILGLATSIDALAVGMGLAFVEVSILKVALSMGSITFALSLAGAWIGHHGGGKFGKWATILGGIILIGIGANIVYEHLSA.

6 helical membrane passes run 3 to 23, 37 to 57, 72 to 88, 111 to 131, 138 to 158, and 164 to 184; these read FLQISLLSIGVAADAFACSVV, LVLAGIFGVFQAAMPLIGWFI, HWIAFALLGIVGTKMIW, IILGLATSIDALAVGMGLAFV, VALSMGSITFALSLAGAWIGH, and FGKWATILGGIILIGIGANIV.

Belongs to the MntP (TC 9.B.29) family.

Its subcellular location is the cell membrane. Functionally, probably functions as a manganese efflux pump. The polypeptide is Putative manganese efflux pump MntP (Corynebacterium glutamicum (strain ATCC 13032 / DSM 20300 / JCM 1318 / BCRC 11384 / CCUG 27702 / LMG 3730 / NBRC 12168 / NCIMB 10025 / NRRL B-2784 / 534)).